The following is a 237-amino-acid chain: Uracil-DNA glycosylase (237 aa).

Residue Asp-77 is the Proton acceptor of the active site.

It belongs to the uracil-DNA glycosylase (UDG) superfamily. UNG family.

It is found in the cytoplasm. It catalyses the reaction Hydrolyzes single-stranded DNA or mismatched double-stranded DNA and polynucleotides, releasing free uracil.. In terms of biological role, excises uracil residues from the DNA which can arise as a result of misincorporation of dUMP residues by DNA polymerase or due to deamination of cytosine. This is Uracil-DNA glycosylase from Acinetobacter baylyi (strain ATCC 33305 / BD413 / ADP1).